Reading from the N-terminus, the 256-residue chain is Myb family transcription factor MPH1 (256 aa).

Positions 14–74 constitute an HTH myb-type domain; it reads RSEVPRMRWT…HLQMYRSGSS (61 aa). The segment at residues 45–70 is a DNA-binding region (H-T-H motif); sequence PKRILQLMGVKGVSISHIKSHLQMYR.

Highly expressed in the pulvinus and stem nodes. Expressed in the plumule of germinating seeds, coleoptile, leaves, internodes, leave sheaths, spikes and roots.

Its subcellular location is the nucleus. Probable transcription factor involved in the regulation of plant height by elongating internode cell length. Involved in the positive regulation of grain yield. May be involved in the regulation of genes related to cell elongation and cell wall synthesis, which are associated with plant height and yield phenotypes. Plays a role in tolerance to cadmium stress. In Oryza sativa subsp. japonica (Rice), this protein is Myb family transcription factor MPH1.